A 245-amino-acid polypeptide reads, in one-letter code: 1-(5-phosphoribosyl)-5-[(5-phosphoribosylamino)methylideneamino] imidazole-4-carboxamide isomerase (245 aa).

The active-site Proton acceptor is aspartate 10. Residue aspartate 129 is the Proton donor of the active site.

It belongs to the HisA/HisF family.

Its subcellular location is the cytoplasm. It carries out the reaction 1-(5-phospho-beta-D-ribosyl)-5-[(5-phospho-beta-D-ribosylamino)methylideneamino]imidazole-4-carboxamide = 5-[(5-phospho-1-deoxy-D-ribulos-1-ylimino)methylamino]-1-(5-phospho-beta-D-ribosyl)imidazole-4-carboxamide. The protein operates within amino-acid biosynthesis; L-histidine biosynthesis; L-histidine from 5-phospho-alpha-D-ribose 1-diphosphate: step 4/9. The protein is 1-(5-phosphoribosyl)-5-[(5-phosphoribosylamino)methylideneamino] imidazole-4-carboxamide isomerase of Parafrankia sp. (strain EAN1pec).